A 331-amino-acid chain; its full sequence is Probable allantoicase (331 aa).

It belongs to the allantoicase family.

The catalysed reaction is allantoate + H2O = (S)-ureidoglycolate + urea. The protein operates within nitrogen metabolism; (S)-allantoin degradation; (S)-ureidoglycolate from allantoate (aminidohydrolase route): step 1/1. This Stutzerimonas stutzeri (strain A1501) (Pseudomonas stutzeri) protein is Probable allantoicase.